The chain runs to 113 residues: UPF0251 protein Teth514_1147 (113 aa).

The protein belongs to the UPF0251 family.

This Thermoanaerobacter sp. (strain X514) protein is UPF0251 protein Teth514_1147.